Here is a 124-residue protein sequence, read N- to C-terminus: MAENSRYVRLDANGTEGIEEPNPSRRIRNKSILEKMLNSNDAESQQVAKRRRVEERPASSSNPDYVCINDVSINSPVTPIPASPSPAALDFPTISRRISQSLEKSRECVWISCGHRNFSRESFN.

The tract at residues M1–Y65 is disordered. The span at L37–V47 shows a compositional bias: polar residues.

This is an uncharacterized protein from Microplitis demolitor (Parasitoid wasp).